The sequence spans 240 residues: Probable septum site-determining protein MinC (240 aa).

The protein belongs to the MinC family. As to quaternary structure, interacts with MinD and FtsZ.

Its function is as follows. Cell division inhibitor that blocks the formation of polar Z ring septums. Rapidly oscillates between the poles of the cell to destabilize FtsZ filaments that have formed before they mature into polar Z rings. Prevents FtsZ polymerization. The protein is Probable septum site-determining protein MinC of Acinetobacter baumannii (strain AYE).